The primary structure comprises 232 residues: Phosphatidylserine decarboxylase proenzyme (232 aa).

S190 serves as the catalytic Schiff-base intermediate with substrate; via pyruvic acid. Pyruvic acid (Ser); by autocatalysis is present on S190.

Belongs to the phosphatidylserine decarboxylase family. PSD-A subfamily. Heterodimer of a large membrane-associated beta subunit and a small pyruvoyl-containing alpha subunit. Requires pyruvate as cofactor. Post-translationally, is synthesized initially as an inactive proenzyme. Formation of the active enzyme involves a self-maturation process in which the active site pyruvoyl group is generated from an internal serine residue via an autocatalytic post-translational modification. Two non-identical subunits are generated from the proenzyme in this reaction, and the pyruvate is formed at the N-terminus of the alpha chain, which is derived from the carboxyl end of the proenzyme. The post-translation cleavage follows an unusual pathway, termed non-hydrolytic serinolysis, in which the side chain hydroxyl group of the serine supplies its oxygen atom to form the C-terminus of the beta chain, while the remainder of the serine residue undergoes an oxidative deamination to produce ammonia and the pyruvoyl prosthetic group on the alpha chain.

Its subcellular location is the cell membrane. The enzyme catalyses a 1,2-diacyl-sn-glycero-3-phospho-L-serine + H(+) = a 1,2-diacyl-sn-glycero-3-phosphoethanolamine + CO2. Its pathway is phospholipid metabolism; phosphatidylethanolamine biosynthesis; phosphatidylethanolamine from CDP-diacylglycerol: step 2/2. Catalyzes the formation of phosphatidylethanolamine (PtdEtn) from phosphatidylserine (PtdSer). The sequence is that of Phosphatidylserine decarboxylase proenzyme from Rhodopseudomonas palustris (strain BisB18).